A 602-amino-acid chain; its full sequence is Translation initiation factor IF-2 (602 aa).

In terms of domain architecture, tr-type G spans 112–281 (KRAPIITIMG…LLLCEVLDLK (170 aa)). Residues 121–128 (GHVDHGKT) form a G1 region. Residue 121 to 128 (GHVDHGKT) participates in GTP binding. A G2 region spans residues 146 to 150 (GITQH). The G3 stretch occupies residues 167 to 170 (DTPG). GTP contacts are provided by residues 167–171 (DTPGH) and 221–224 (NKMD). The tract at residues 221–224 (NKMD) is G4. A G5 region spans residues 257–259 (SAL).

The protein belongs to the TRAFAC class translation factor GTPase superfamily. Classic translation factor GTPase family. IF-2 subfamily.

It is found in the cytoplasm. Its function is as follows. One of the essential components for the initiation of protein synthesis. Protects formylmethionyl-tRNA from spontaneous hydrolysis and promotes its binding to the 30S ribosomal subunits. Also involved in the hydrolysis of GTP during the formation of the 70S ribosomal complex. This is Translation initiation factor IF-2 from Mycoplasmopsis synoviae (strain 53) (Mycoplasma synoviae).